We begin with the raw amino-acid sequence, 160 residues long: Major strawberry allergen Fra a 1.04 (160 aa).

It belongs to the BetVI family. Post-translationally, phosphorylated in vivo. Phosphorylation prevents its activity as ribonuclease. In terms of tissue distribution, highly expressed in roots. Expressed a low levels in ripe red fruits.

Possesses ribonuclease activity in vitro. The polypeptide is Major strawberry allergen Fra a 1.04 (Fragaria ananassa (Strawberry)).